The following is a 107-amino-acid chain: MIDVEVVFALPETATSLTIEVVKGTTVEQAVIQSGIIEKHPEIDATALTLGVWNRTVKPNQELKEGDRIEIYRPLIADPKDARRKRAEKAKEEGRANKVTGGRPIER.

Residues Ala82–Arg107 form a disordered region.

This sequence belongs to the UPF0125 (RnfH) family.

In Pseudoalteromonas translucida (strain TAC 125), this protein is Protein RnfH.